A 1236-amino-acid polypeptide reads, in one-letter code: Calcium-activated potassium channel subunit alpha-1 (1236 aa).

Positions Met-1–Ser-21 are enriched in gly residues. The disordered stretch occupies residues Met-1–Val-61. Residues Met-1–Met-86 are Extracellular-facing. Residues Ser-39–Ser-60 are compositionally biased toward low complexity. Residues Trp-87–Leu-107 form a helical membrane-spanning segment. Residues Trp-108–Arg-178 are Cytoplasmic-facing. Residues Cys-118, Cys-119, and Cys-121 are each lipidated (S-palmitoyl cysteine). Residues Val-179–Ser-199 form a helical membrane-spanning segment. Residues Ser-200–Thr-214 are Extracellular-facing. A helical membrane pass occupies residues Leu-215–Ala-235. Residues Ala-236–Lys-239 lie on the Cytoplasmic side of the membrane. The chain crosses the membrane as a helical span at residues Leu-240–Val-260. Residues Ser-261–Leu-264 are Extracellular-facing. The chain crosses the membrane as a helical span at residues Asn-265–Ile-285. Over Leu-286–Leu-300 the chain is Cytoplasmic. Residues Val-301–Val-321 form a helical membrane-spanning segment. Residues Glu-322–Gln-335 lie on the Extracellular side of the membrane. Positions Ala-336 to Val-358 form an intramembrane region, pore-forming. The short motif at Thr-352–Tyr-355 is the Selectivity for potassium element. At Tyr-359–Leu-367 the chain is on the extracellular side. Residues Phe-368–Ile-388 form a helical membrane-spanning segment. Over Glu-389–Leu-1236 the chain is Cytoplasmic. One can recognise an RCK N-terminal 1 domain in the interval Arg-407 to Ile-549. Positions 439, 462, and 464 each coordinate Mg(2+). Residues Leu-556–Phe-576 form a segment S7 region. Residues Leu-613–Ile-633 form a segment S8 region. The tract at residues Cys-677–His-681 is heme-binding motif. The tract at residues Glu-757–Arg-787 is disordered. Position 763 is a phosphothreonine (Thr-763). Phosphoserine occurs at positions 765, 778, and 782. The interval Val-837–Leu-857 is segment S9. Positions Ser-839–Pro-983 constitute an RCK N-terminal 2 domain. At Thr-970 the chain carries Phosphothreonine. Phosphoserine occurs at positions 978 and 982. Positions Thr-1003–Glu-1025 match the Calcium bowl motif. Residues Gln-1012, Asp-1015, Asp-1018, and Asp-1020 each coordinate Ca(2+). The tract at residues Phe-1032–Phe-1052 is segment S10. Residues Arg-1186–Ser-1211 show a composition bias toward low complexity. The disordered stretch occupies residues Arg-1186 to Leu-1236. Over residues Lys-1220 to Leu-1236 the composition is skewed to basic and acidic residues. 2 positions are modified to phosphoserine: Ser-1221 and Ser-1224.

This sequence belongs to the potassium channel family. Calcium-activated (TC 1.A.1.3) subfamily. KCa1.1/KCNMA1 sub-subfamily. In terms of assembly, homotetramer; which constitutes the calcium-activated potassium channel. Interacts with RAB11B. Interacts with beta subunits KCNMB1, KCNMB2, KCNMB3 and KCNMB4. Interacts with gamma subunits LRRC26, LRRC38, LRRC52 and LRRC55. Beta and gamma subunits are accessory, and modulate its activity. In terms of processing, phosphorylated. Phosphorylation by kinases such as PKA and/or PKG. In smooth muscles, phosphorylation affects its activity. Post-translationally, palmitoylation by ZDHHC22 and ZDHHC23 within the intracellular linker between the S0 and S1 transmembrane domains regulates localization to the plasma membrane. Depalmitoylated by LYPLA1 and LYPLAL1, leading to retard exit from the trans-Golgi network. As to expression, widely expressed. Except in myocytes, it is almost ubiquitously expressed.

The protein localises to the cell membrane. It carries out the reaction K(+)(in) = K(+)(out). Ethanol and carbon monoxide-bound heme increase channel activation. Heme inhibits channel activation. In terms of biological role, potassium channel activated by both membrane depolarization or increase in cytosolic Ca(2+) that mediates export of K(+). It is also activated by the concentration of cytosolic Mg(2+). Its activation dampens the excitatory events that elevate the cytosolic Ca(2+) concentration and/or depolarize the cell membrane. It therefore contributes to repolarization of the membrane potential. Plays a key role in controlling excitability in a number of systems, such as regulation of the contraction of smooth muscle, the tuning of hair cells in the cochlea, regulation of transmitter release, and innate immunity. In smooth muscles, its activation by high level of Ca(2+), caused by ryanodine receptors in the sarcoplasmic reticulum, regulates the membrane potential. In cochlea cells, its number and kinetic properties partly determine the characteristic frequency of each hair cell and thereby helps to establish a tonotopic map. Kinetics of KCNMA1 channels are determined by alternative splicing, phosphorylation status and its combination with modulating beta subunits. Highly sensitive to both iberiotoxin (IbTx) and charybdotoxin (CTX). Possibly induces sleep when activated by melatonin and through melatonin receptor MTNR1A-dependent dissociation of G-beta and G-gamma subunits, leading to increased sensitivity to Ca(2+) and reduced synaptic transmission. Its function is as follows. Potassium channel activated by both membrane depolarization or increase in cytosolic Ca(2+) that mediates export of K(+). The protein is Calcium-activated potassium channel subunit alpha-1 of Homo sapiens (Human).